The following is a 68-amino-acid chain: Metallothionein-3 (68 aa).

At Met-1 the chain carries N-acetylmethionine. The segment at 1–30 is beta; that stretch reads MDPETCPCPSGGSCTCADSCKCEGCKCTSC. 9 residues coordinate a divalent metal cation: Cys-6, Cys-8, Cys-14, Cys-16, Cys-20, Cys-22, Cys-25, Cys-27, and Cys-30. The alpha stretch occupies residues 31–68; sequence KKSCCSCCPAECEKCAKDCVCKGGEAAEAEAEKCSCCQ. Residue Ser-33 is modified to Phosphoserine. Cys-34, Cys-35, Cys-37, Cys-38, Cys-42, Cys-45, Cys-49, Cys-51, Cys-64, Cys-66, and Cys-67 together coordinate a divalent metal cation.

Belongs to the metallothionein superfamily. Type 1 family. As to expression, abundant in a subset of astrocytes in the normal human brain, but greatly reduced in the Alzheimer disease (AD) brain.

In terms of biological role, binds heavy metals. Contains three zinc and three copper atoms per polypeptide chain and only a negligible amount of cadmium. Inhibits survival and neurite formation of cortical neurons in vitro. The protein is Metallothionein-3 (MT3) of Homo sapiens (Human).